Reading from the N-terminus, the 354-residue chain is 3-dehydroquinate synthase (354 aa).

NAD(+) contacts are provided by residues 100–104, 124–125, Lys136, Lys145, and 163–166; these read GATGD, TT, and FLKT. Positions 178, 242, and 256 each coordinate Zn(2+).

The protein belongs to the sugar phosphate cyclases superfamily. Dehydroquinate synthase family. NAD(+) serves as cofactor. The cofactor is Co(2+). Zn(2+) is required as a cofactor.

The protein resides in the cytoplasm. The catalysed reaction is 7-phospho-2-dehydro-3-deoxy-D-arabino-heptonate = 3-dehydroquinate + phosphate. Its pathway is metabolic intermediate biosynthesis; chorismate biosynthesis; chorismate from D-erythrose 4-phosphate and phosphoenolpyruvate: step 2/7. In terms of biological role, catalyzes the conversion of 3-deoxy-D-arabino-heptulosonate 7-phosphate (DAHP) to dehydroquinate (DHQ). This Staphylococcus aureus (strain MSSA476) protein is 3-dehydroquinate synthase.